The primary structure comprises 109 residues: Urocortin-2 (109 aa).

Residues 1-22 form the signal peptide; it reads MTRWALVVFMVLMLDRVPGTPI. Positions 23 to 67 are excised as a propeptide; sequence PTFQLLPQNYPETTPSSVSSESPSDTTTGPSASWSNSKASPYLDT. Residues 24-60 are disordered; it reads TFQLLPQNYPETTPSSVSSESPSDTTTGPSASWSNSK. A compositionally biased stretch (low complexity) spans 33–50; the sequence is PETTPSSVSSESPSDTTT. Residues 51–60 are compositionally biased toward polar residues; that stretch reads GPSASWSNSK. Valine amide; partial is present on valine 106.

Belongs to the sauvagine/corticotropin-releasing factor/urotensin I family. Binds with high affinity to CRF receptors 2-alpha and 2-beta. Glycosylated.

The protein localises to the secreted. In terms of biological role, suppresses food intake, delays gastric emptying and decreases heat-induced edema. Might represent an endogenous ligand for maintaining homeostasis after stress. This Rattus norvegicus (Rat) protein is Urocortin-2 (Ucn2).